The chain runs to 196 residues: Translation machinery-associated protein 22 (196 aa).

In terms of domain architecture, SUI1 spans 111–182 (IIIKRIERNK…EAKEYIEKLL (72 aa)).

It belongs to the DENR family. Interacts with the 40S ribosomal subunit.

Its subcellular location is the cytoplasm. In Lodderomyces elongisporus (strain ATCC 11503 / CBS 2605 / JCM 1781 / NBRC 1676 / NRRL YB-4239) (Yeast), this protein is Translation machinery-associated protein 22 (TMA22).